Here is a 2988-residue protein sequence, read N- to C-terminus: NBPF family member NBPF14 (2988 aa).

A coiled-coil region spans residues 75–119 (RQFKEEKLAEQLKQAEELRQYKVLVHSQERELTQLREKLREGRDA). 3 disordered regions span residues 161 to 200 (KLSP…SKVP), 451 to 474 (EKVQ…PEDS), and 520 to 566 (WEDA…EGYS). Positions 165-177 (ENDEDEDEDVQVE) are enriched in acidic residues. Olduvai domains are found at residues 165–259 (ENDE…NILP), 436–528 (ENDN…HIIP), 529–600 (ENES…VDIG), 601–692 (RHRW…PSCP), 695–750 (SREL…LDVD), 751–843 (RIKK…RSKK), 844–919 (ERRR…LDVD), 920–1012 (RIKK…RSKK), 1013–1105 (ERRR…PSCP), 1108–1163 (SREL…LDVD), 1164–1256 (RIKK…RSKK), 1257–1349 (ERRR…PSCP), 1352–1407 (SREL…LDVD), 1408–1500 (RIKK…RSKK), 1501–1593 (ERRR…PSCP), 1596–1651 (SREL…LDVD), 1652–1744 (RFKK…RSKK), 1745–1837 (ERRR…PSCP), 1840–1895 (SREL…LDVD), 1896–1988 (RIKK…RSKK), 1989–2081 (ERRR…PSCP), 2084–2139 (SREL…LDVD), 2140–2232 (RIKK…RSKK), 2233–2325 (ERRR…PSCP), 2328–2383 (SREL…LDVD), 2384–2476 (RIKK…RSKK), 2477–2569 (ERRR…PSCP), 2572–2627 (SREL…LDVD), 2628–2720 (RIKK…RSKK), 2721–2813 (ERRR…PSCP), 2816–2889 (SREL…RSKK), and 2890–2988 (ERRR…IFPQ). Basic and acidic residues predominate over residues 190-200 (EVQKAEESKVP). 2 stretches are compositionally biased toward acidic residues: residues 530–539 (NESDDEEEEE) and 550–562 (ESEE…ESWD). 3 disordered regions span residues 754–773 (KDEE…SREL), 828–871 (EKKG…LDEK), and 999–1038 (KGKG…ELLD). Composition is skewed to basic residues over residues 831–849 (GKGK…RRGR) and 1000–1018 (GKGK…RRGR). Positions 1243–1282 (KGKGKKRRGRRSKKERRRGRKEGEEDQNPPCPRLSRELLD) are disordered. A compositionally biased stretch (basic residues) spans 1244-1262 (GKGKKRRGRRSKKERRRGR). Residues 1487–1521 (KGKGKKRRGRRSKKERRRGRKEGEEDQNPPCPRLS) form a disordered region. A compositionally biased stretch (basic residues) spans 1488–1506 (GKGKKRRGRRSKKERRRGR). The tract at residues 1731 to 1770 (KGKGKKRRGRRSKKERRRGRKEGEEDQNPPCPRLSRELLD) is disordered. The span at 1732–1750 (GKGKKRRGRRSKKERRRGR) shows a compositional bias: basic residues. A disordered region spans residues 1975 to 2014 (KGKGKKRRGRRSKKERRRGRKEGEEDQNPPCPRLSRELLD). Over residues 1976–1994 (GKGKKRRGRRSKKERRRGR) the composition is skewed to basic residues. The disordered stretch occupies residues 2219 to 2258 (KGKGKKRRGRRSKKERRRGRKEGEEDQNPPCPRLSRELLD). Residues 2220–2238 (GKGKKRRGRRSKKERRRGR) are compositionally biased toward basic residues. The disordered stretch occupies residues 2463-2502 (KGKGKKRRGRRSKKERRRGRKEGEEDQNPPCPRLSRELLD). Residues 2464 to 2482 (GKGKKRRGRRSKKERRRGR) are compositionally biased toward basic residues. 2 disordered regions span residues 2707-2745 (KGKG…RELL) and 2877-2909 (GKGK…CPRL). Basic residues-rich tracts occupy residues 2708–2726 (GKGK…RRGR) and 2877–2895 (GKGK…RRGR).

It belongs to the NBPF family. In terms of tissue distribution, expressed in spleen and fetal liver.

It localises to the cytoplasm. The polypeptide is NBPF family member NBPF14 (Homo sapiens (Human)).